Reading from the N-terminus, the 65-residue chain is Large ribosomal subunit protein bL35c (65 aa).

Belongs to the bacterial ribosomal protein bL35 family.

Its subcellular location is the plastid. It localises to the cyanelle. This Cyanophora paradoxa protein is Large ribosomal subunit protein bL35c (rpl35).